The sequence spans 233 residues: Large ribosomal subunit protein uL1 (233 aa).

The protein belongs to the universal ribosomal protein uL1 family. In terms of assembly, part of the 50S ribosomal subunit.

Binds directly to 23S rRNA. The L1 stalk is quite mobile in the ribosome, and is involved in E site tRNA release. Functionally, protein L1 is also a translational repressor protein, it controls the translation of the L11 operon by binding to its mRNA. This is Large ribosomal subunit protein uL1 from Marinomonas sp. (strain MWYL1).